Reading from the N-terminus, the 286-residue chain is Acyl-CoA-binding domain-containing protein 6 (286 aa).

The region spanning 32–117 (LQCQFEQAAK…VKKLDPDWSP (86 aa)) is the ACB domain. An acyl-CoA is bound by residues 59–63 (YARYK), Lys-85, and Tyr-104. ANK repeat units follow at residues 182-211 (EGRS…HINM) and 215-244 (EGQT…DPSL).

The protein resides in the cytoplasm. Its subcellular location is the nucleus. Functionally, binds long-chain acyl-coenzyme A molecules with a strong preference for unsaturated C18:1-CoA. Does not bind fatty acids. Plays a role in protein N-myristoylation. This Xenopus laevis (African clawed frog) protein is Acyl-CoA-binding domain-containing protein 6 (acbd6).